Here is a 499-residue protein sequence, read N- to C-terminus: MPSIVRNHGPHNKILLSALLLALFGWVPLASAAVAVPMDSTGPYRTVSHPENAPSGVDAGVGPSEWTHAYANPAHNAAFPVPDDAPEWIRNGVSWLFPEARAWPLANPPFGSKTYGAAEASVTQTQFYGNALGPSVVDGVVYAESDDMFAYAVNAKTGKLIWRASPVGNNLMGNPLVIGNTVYLSAGSVAFNFANVLRYAHNPSASARGLNVSFNGIYALNRSNGKLLWYFATPGETMATPAYDNNTLFIADGAGNAFGINATTGKQVWKTHVGGMDNMSSVTAYRHNIYFAMAIKPYLYCLNESNGHIVWKGTIPGASNTGIGDVSPAAADGVVVLDATTKPQANKKAMFSNVIRAFDAKTGAVLWTRNMGSGGKIPAFKGGVPMIHNNIVYVGNPVASTYQAYELKTGKLLWTWHVPTKVAAGAGRSAPTYYKGLLYITTGQYIFVVNPATGKELHQHHIGGQFGIESPVIVGGTVYLTNSWDWIMAIPLKTISHGS.

The signal sequence occupies residues 1-32 (MPSIVRNHGPHNKILLSALLLALFGWVPLASA).

The protein belongs to the tetrathionate hydrolase family. Homodimer.

The protein resides in the cell membrane. The catalysed reaction is tetrathionate + H2O = sulfur + thiosulfate + sulfate + H(+). In terms of biological role, catalyzes the hydrolysis of tetrathionate to generate elemental sulfur, thiosulfate and sulfate. This chain is Tetrathionate hydrolase, found in Acidithiobacillus ferrooxidans (strain ATCC 23270 / DSM 14882 / CIP 104768 / NCIMB 8455) (Ferrobacillus ferrooxidans (strain ATCC 23270)).